The following is a 92-amino-acid chain: UPF0250 protein Rmag_0541 (92 aa).

It belongs to the UPF0250 family.

The sequence is that of UPF0250 protein Rmag_0541 from Ruthia magnifica subsp. Calyptogena magnifica.